The following is a 418-amino-acid chain: Actin-like protein C08B11.6 (418 aa).

This sequence belongs to the actin family. ARP6 subfamily.

The protein localises to the cytoplasm. Its subcellular location is the cytoskeleton. The sequence is that of Actin-like protein C08B11.6 (arp-6) from Caenorhabditis elegans.